A 326-amino-acid chain; its full sequence is Mitochondrial glycine transporter (326 aa).

3 Solcar repeats span residues 45–134, 141–225, and 237–321; these read HPVI…SKQY, PTAL…TRTA, and LIPL…MMAR. 6 helical membrane-spanning segments follow: residues 51–76, 109–135, 147–172, 200–223, 241–267, and 296–314; these read FLCGSISGTCSTLLFQPLDLLKTRLQ, GMSPSIVRCVPGVGIYFGTLYSSKQYF, VILGMGSRSVAGVCMSPITVIKTRYE, GLTATLLRDAPFSGLYLMFYSQTR, INFSCGIFAGVLASLVTQPADVIKTHM, and GSVPRALRRTLMAAMAWTV.

Belongs to the mitochondrial carrier (TC 2.A.29) family. SLC25A38 subfamily.

The protein localises to the mitochondrion inner membrane. The enzyme catalyses glycine(in) = glycine(out). Its function is as follows. Mitochondrial glycine transporter that imports glycine into the mitochondrial matrix. Plays an important role in providing glycine for the first enzymatic step in heme biosynthesis, the condensation of glycine with succinyl-CoA to produce 5-aminolevulinate (ALA) in the mitochondrial matrix. Required during erythropoiesis. In terms of biological role, plays a role as pro-apoptotic protein that induces caspase-dependent apoptosis. The protein is Mitochondrial glycine transporter of Mus musculus (Mouse).